A 71-amino-acid chain; its full sequence is General transcription and DNA repair factor IIH subunit TFB5 (71 aa).

It belongs to the TFB5 family. In terms of assembly, component of the 7-subunit TFIIH core complex composed of XPB, XPD, TFB1/GTF2H1, GTF2H2/P44, TFB4/GTF2H3, TFB2/GTF2H4 and TFB5/GTF2H5, which is active in NER. The core complex associates with the 3-subunit CDK-activating kinase (CAK) module composed of CYCH1/cyclin H1, CDKD and MAT1/At4g30820 to form the 10-subunit holoenzyme (holo-TFIIH) active in transcription.

Its subcellular location is the nucleus. Component of the general transcription and DNA repair factor IIH (TFIIH) core complex, which is involved in general and transcription-coupled nucleotide excision repair (NER) of damaged DNA and, when complexed to CAK, in RNA transcription by RNA polymerase II. In NER, TFIIH acts by opening DNA around the lesion to allow the excision of the damaged oligonucleotide and its replacement by a new DNA fragment. In transcription, TFIIH has an essential role in transcription initiation. When the pre-initiation complex (PIC) has been established, TFIIH is required for promoter opening and promoter escape. Phosphorylation of the C-terminal tail (CTD) of the largest subunit of RNA polymerase II by the kinase module CAK controls the initiation of transcription. This Arabidopsis thaliana (Mouse-ear cress) protein is General transcription and DNA repair factor IIH subunit TFB5.